Consider the following 297-residue polypeptide: Ribosomal RNA small subunit methyltransferase A (297 aa).

S-adenosyl-L-methionine-binding residues include asparagine 31, leucine 33, glycine 58, glutamate 79, aspartate 104, and asparagine 129.

The protein belongs to the class I-like SAM-binding methyltransferase superfamily. rRNA adenine N(6)-methyltransferase family. RsmA subfamily.

It localises to the cytoplasm. The enzyme catalyses adenosine(1518)/adenosine(1519) in 16S rRNA + 4 S-adenosyl-L-methionine = N(6)-dimethyladenosine(1518)/N(6)-dimethyladenosine(1519) in 16S rRNA + 4 S-adenosyl-L-homocysteine + 4 H(+). In terms of biological role, specifically dimethylates two adjacent adenosines (A1518 and A1519) in the loop of a conserved hairpin near the 3'-end of 16S rRNA in the 30S particle. May play a critical role in biogenesis of 30S subunits. The sequence is that of Ribosomal RNA small subunit methyltransferase A from Staphylococcus aureus (strain MRSA252).